Reading from the N-terminus, the 486-residue chain is Probable peptidoglycan glycosyltransferase FtsW (486 aa).

Topologically, residues 1–50 are cytoplasmic; sequence MAGAARDRAFLDHFGGAGADRPCHVEGALMNDMSRQATRLDAIGGRYDPW. Residues 51 to 71 form a helical membrane-spanning segment; the sequence is LLGAAVTLASLGVVMVASSSI. The Periplasmic portion of the chain corresponds to 72 to 77; that stretch reads ELEASP. Residues 78 to 98 traverse the membrane as a helical segment; the sequence is FYYLTRHLLFLGGGIALAFWA. Topologically, residues 99-112 are cytoplasmic; that stretch reads MRTELKTIEQHNQM. A helical membrane pass occupies residues 113-133; it reads LLLACFVLLVVVFVPGLGSTV. The Periplasmic portion of the chain corresponds to 134 to 141; it reads NGAKRWIN. Residues 142-162 traverse the membrane as a helical segment; sequence LGVSRFQVVESVKVFYIIWLA. Residues 163–174 lie on the Cytoplasmic side of the membrane; sequence SYLVRFRDEVNA. Residues 175 to 195 traverse the membrane as a helical segment; the sequence is TWQAMLKPVFVVGLLVGLLLL. At 196–199 the chain is on the periplasmic side; sequence QPDF. Residues 200-220 form a helical membrane-spanning segment; the sequence is GSSMLLLSVTACMLVLGGAPI. Residues 221 to 222 are Cytoplasmic-facing; it reads GR. A helical transmembrane segment spans residues 223–243; it reads IILPILLLLPALVALVIFEPY. The Periplasmic portion of the chain corresponds to 244–298; sequence RMRRVTSFMDPWVDQLGSGYQLSNALMAIGRGQWTGVGLGASVQKLNYLPESHTD. A helical transmembrane segment spans residues 299–319; it reads FIFSVIAEELGFVGVCGVIGL. At 320–342 the chain is on the cytoplasmic side; that stretch reads YALLVGRAFWLGMRCVEMKRHFS. A helical transmembrane segment spans residues 343–363; it reads GYIAFGIGLWIAMQSFVSIGV. Over 364-374 the chain is Periplasmic; that stretch reads NLGILPTKGLT. A helical membrane pass occupies residues 375–395; it reads LPLISSGGSSVLMTCLAMGVL. Over 396–486 the chain is Cytoplasmic; it reads LRVSYEADRA…RVEPTFGRIA (91 aa).

It belongs to the SEDS family. FtsW subfamily.

The protein localises to the cell inner membrane. It carries out the reaction [GlcNAc-(1-&gt;4)-Mur2Ac(oyl-L-Ala-gamma-D-Glu-L-Lys-D-Ala-D-Ala)](n)-di-trans,octa-cis-undecaprenyl diphosphate + beta-D-GlcNAc-(1-&gt;4)-Mur2Ac(oyl-L-Ala-gamma-D-Glu-L-Lys-D-Ala-D-Ala)-di-trans,octa-cis-undecaprenyl diphosphate = [GlcNAc-(1-&gt;4)-Mur2Ac(oyl-L-Ala-gamma-D-Glu-L-Lys-D-Ala-D-Ala)](n+1)-di-trans,octa-cis-undecaprenyl diphosphate + di-trans,octa-cis-undecaprenyl diphosphate + H(+). Its pathway is cell wall biogenesis; peptidoglycan biosynthesis. Functionally, peptidoglycan polymerase that is essential for cell division. The chain is Probable peptidoglycan glycosyltransferase FtsW from Xanthomonas oryzae pv. oryzae (strain KACC10331 / KXO85).